The chain runs to 409 residues: Serine/threonine transporter SstT (409 aa).

A run of 9 helical transmembrane segments spans residues 24–44 (LALGIVIGSVSPQLGLAAGLF), 48–68 (FVGALKAVAPVLVFILVAATI), 82–102 (IIVLYLIGTFSAALTAVIAGM), 142–162 (AIANANYIGILAWALVLGAAL), 194–214 (LGIFGLVSSTIAETGFGALAG), 218–238 (LLAVLLGCMAFIALAVNPAIV), 292–312 (IPLGATVNMGGAAITITVLAM), 319–339 (GIQVDFATALLLSLVATVSAC), and 365–385 (VAMQVVAVGFIIGVIQDSAET).

Belongs to the dicarboxylate/amino acid:cation symporter (DAACS) (TC 2.A.23) family.

Its subcellular location is the cell inner membrane. The catalysed reaction is L-serine(in) + Na(+)(in) = L-serine(out) + Na(+)(out). It catalyses the reaction L-threonine(in) + Na(+)(in) = L-threonine(out) + Na(+)(out). Involved in the import of serine and threonine into the cell, with the concomitant import of sodium (symport system). This chain is Serine/threonine transporter SstT, found in Neisseria gonorrhoeae (strain NCCP11945).